Consider the following 220-residue polypeptide: Glutathione S-transferase U23 (220 aa).

The GST N-terminal domain maps to Glu3 to Asn82. Residues Ser13–Met14, Asn39–Lys40, Lys53–Ile54, and Glu66–Ser67 contribute to the glutathione site. The GST C-terminal domain maps to Asp88–Ser208.

It belongs to the GST superfamily. Tau family.

Its subcellular location is the cytoplasm. The protein localises to the cytosol. It carries out the reaction RX + glutathione = an S-substituted glutathione + a halide anion + H(+). May be involved in the conjugation of reduced glutathione to a wide number of exogenous and endogenous hydrophobic electrophiles and have a detoxification role against certain herbicides. The polypeptide is Glutathione S-transferase U23 (GSTU23) (Arabidopsis thaliana (Mouse-ear cress)).